Here is a 275-residue protein sequence, read N- to C-terminus: Aliphatic sulfonates import ATP-binding protein SsuB 1 (275 aa).

Residues 34–260 (ISLTGLEKSF…RHGHPGLCEL (227 aa)) form the ABC transporter domain. Residue 66 to 73 (GKSGCGKS) coordinates ATP.

The protein belongs to the ABC transporter superfamily. Aliphatic sulfonates importer (TC 3.A.1.17.2) family. As to quaternary structure, the complex is composed of two ATP-binding proteins (SsuB), two transmembrane proteins (SsuC) and a solute-binding protein (SsuA).

Its subcellular location is the cell inner membrane. The catalysed reaction is ATP + H2O + aliphatic sulfonate-[sulfonate-binding protein]Side 1 = ADP + phosphate + aliphatic sulfonateSide 2 + [sulfonate-binding protein]Side 1.. Its function is as follows. Part of the ABC transporter complex SsuABC involved in aliphatic sulfonates import. Responsible for energy coupling to the transport system. This Rhizobium johnstonii (strain DSM 114642 / LMG 32736 / 3841) (Rhizobium leguminosarum bv. viciae) protein is Aliphatic sulfonates import ATP-binding protein SsuB 1.